The sequence spans 283 residues: Tetraspanin-33 (283 aa).

Over 1–24 (MARRPGVPAAYGDEFSFVSPLVKY) the chain is Cytoplasmic. Residues 25-45 (LLFFFNMLFWVISMVMVAVGV) form a helical membrane-spanning segment. Residues 46 to 64 (YARLMKHAEAALACLAVDP) are Extracellular-facing. The chain crosses the membrane as a helical span at residues 65–85 (AILLIVVGVLMFLLTFCGCIG). Topologically, residues 86–96 (SLRENICLLQT) are cytoplasmic. Residues 97–117 (FSLCLTIVFLLQLAAGILGFV) form a helical membrane-spanning segment. Over 118–235 (FSDKARGKVS…DKLVNWIHSN (118 aa)) the chain is Extracellular. 4 cysteine pairs are disulfide-bonded: Cys-156/Cys-224, Cys-157/Cys-189, Cys-173/Cys-183, and Cys-190/Cys-203. Asn-172 carries N-linked (GlcNAc...) asparagine glycosylation. The chain crosses the membrane as a helical span at residues 236 to 256 (LFLLGGVALGLAIPQLVGILL). The Cytoplasmic portion of the chain corresponds to 257–283 (SQVLVNQIKDQIKLQLYNQQHRADPWY).

It belongs to the tetraspanin (TM4SF) family. Homodimer; disulfide-linked. Interacts (via extracellular domain) with ADAM10 (via extracellular domain). Interacts (via cytoplasmic domain) with PLEKHA7 (via WW domains); the interaction is dependent on PDZD11 being bound to PLEKHA7 and facilitates the docking of ADAM10 to zonula adherens. Predominantly expressed in erythroblasts.

The protein resides in the cell membrane. Its subcellular location is the cell junction. It localises to the adherens junction. The protein localises to the cytoplasm. Its function is as follows. Part of TspanC8 subgroup, composed of 6 members that interact with the transmembrane metalloprotease ADAM10. This interaction is required for ADAM10 exit from the endoplasmic reticulum and for enzymatic maturation and trafficking to the cell surface as well as substrate specificity. Different TspanC8/ADAM10 complexes have distinct substrates. Plays an important role in normal erythropoiesis. It has a role in the differentiation of erythroid progenitors. Negatively regulates ligand-induced Notch activity probably by regulating ADAM10 activity. Mediates docking of ADAM10 to zonula adherens by interacting with ADAM10 and, in a PDZD11-dependent manner, with the zonula adherens protein PLEKHA7. This chain is Tetraspanin-33 (Tspan33), found in Mus musculus (Mouse).